The following is a 369-amino-acid chain: Omega-amidase, chloroplastic (369 aa).

The transit peptide at 1–63 (MKSAISSSLF…SALRSISSSM (63 aa)) directs the protein to the chloroplast. Position 64 is an N-acetylalanine (alanine 64). Positions 88–337 (FNIGLCQLSV…EAIIIAEIDY (250 aa)) constitute a CN hydrolase domain. The Proton acceptor role is filled by glutamate 127. Lysine 201 (proton donor) is an active-site residue. Cysteine 242 (nucleophile) is an active-site residue.

It belongs to the nitrilase superfamily. NIT1/NIT2 family.

It is found in the plastid. Its subcellular location is the chloroplast. It catalyses the reaction a monoamide of a dicarboxylate + H2O = a dicarboxylate + NH4(+). Its function is as follows. Omega-amidase involved in the metabolism of asparagine. Probably also closely coupled with glutamine transamination in the methionine salvage cycle. Can use alpha-ketosuccinamate and alpha-hydroxysuccinamate as substrates, producing respectively oxaloacetate and malate, or alpha-ketoglutaramate, producing alpha-ketoglutarate. The chain is Omega-amidase, chloroplastic from Arabidopsis thaliana (Mouse-ear cress).